Consider the following 250-residue polypeptide: MVLASNHSNIEIKSDIPLINSMESYSLDKNMSNSIISTNLNDFSNWARLSSLWPLLYGTSCCFIEFASLIGSRFDFDRYGLVPRSSPRQADLIITAGTVTMKMAPSLVRLYEQMPEPKYVIAMGACTITGGMFSTDSYSTVRGIDKLIPVDVYLPGCPPKPEAIIDAIIKLRKKVAQETYRDRTKNKRENRFFTSNHQFKFVPSIHTGQYISDQSSIPLLDLPLERTISEMRFDNKFFMNEEELLPKGRK.

4 residues coordinate [4Fe-4S] cluster: Cys61, Cys62, Cys126, and Cys157.

This sequence belongs to the complex I 20 kDa subunit family. NDH is composed of at least 16 different subunits, 5 of which are encoded in the nucleus. [4Fe-4S] cluster is required as a cofactor.

It localises to the plastid. The protein resides in the chloroplast thylakoid membrane. It catalyses the reaction a plastoquinone + NADH + (n+1) H(+)(in) = a plastoquinol + NAD(+) + n H(+)(out). It carries out the reaction a plastoquinone + NADPH + (n+1) H(+)(in) = a plastoquinol + NADP(+) + n H(+)(out). Its function is as follows. NDH shuttles electrons from NAD(P)H:plastoquinone, via FMN and iron-sulfur (Fe-S) centers, to quinones in the photosynthetic chain and possibly in a chloroplast respiratory chain. The immediate electron acceptor for the enzyme in this species is believed to be plastoquinone. Couples the redox reaction to proton translocation, and thus conserves the redox energy in a proton gradient. The sequence is that of NAD(P)H-quinone oxidoreductase subunit K, chloroplastic from Angiopteris evecta (Mule's foot fern).